We begin with the raw amino-acid sequence, 300 residues long: MTDQKTYCGFIAIVGRPNVGKSTLLNKILGQKISITSRKAQTTRHRILGIKTEGAYQEIYVDTPGLHIEEKRAINRLMNRAAASAIGDVDMVIFVVEGTKWTDDDEMVLNKLRSTKAPVILAINKVDNIKEKEELLPHLTALSQKFPFKEIIPISAQRGKNVHILEKFVRESLKEGIHHYPEDYVTDRSQRFMASEIIREKLMRFMGEELPYSVTVEIEQFKTNERGTYEINGLILVEREGQKKMVIGNKGQKIKVIGTEARADMERLFDNKVHLELWVKVKAGWADDERALRSLGYIDE.

In terms of domain architecture, Era-type G spans 7 to 175 (YCGFIAIVGR…EKFVRESLKE (169 aa)). The interval 15–22 (GRPNVGKS) is G1. 15 to 22 (GRPNVGKS) serves as a coordination point for GTP. Residues 41–45 (QTTRH) form a G2 region. Positions 62 to 65 (DTPG) are G3. GTP contacts are provided by residues 62–66 (DTPGL) and 124–127 (NKVD). Residues 124–127 (NKVD) form a G4 region. The segment at 154–156 (ISA) is G5. One can recognise a KH type-2 domain in the interval 206 to 283 (MGEELPYSVT…HLELWVKVKA (78 aa)).

This sequence belongs to the TRAFAC class TrmE-Era-EngA-EngB-Septin-like GTPase superfamily. Era GTPase family. As to quaternary structure, monomer.

It localises to the cytoplasm. The protein resides in the cell inner membrane. Functionally, an essential GTPase that binds both GDP and GTP, with rapid nucleotide exchange. Plays a role in 16S rRNA processing and 30S ribosomal subunit biogenesis and possibly also in cell cycle regulation and energy metabolism. The protein is GTPase Era of Glaesserella parasuis serovar 5 (strain SH0165) (Haemophilus parasuis).